Here is an 83-residue protein sequence, read N- to C-terminus: Small ribosomal subunit protein bS20 (83 aa).

The protein belongs to the bacterial ribosomal protein bS20 family.

Functionally, binds directly to 16S ribosomal RNA. This chain is Small ribosomal subunit protein bS20, found in Lactobacillus delbrueckii subsp. bulgaricus (strain ATCC 11842 / DSM 20081 / BCRC 10696 / JCM 1002 / NBRC 13953 / NCIMB 11778 / NCTC 12712 / WDCM 00102 / Lb 14).